A 728-amino-acid polypeptide reads, in one-letter code: Catalase-peroxidase (728 aa).

The tryptophyl-tyrosyl-methioninium (Trp-Tyr) (with M-244) cross-link spans 91-218 (WHSAGTYRTA…LAAVQMGLIY (128 aa)). Catalysis depends on histidine 92, which acts as the Proton acceptor. The tryptophyl-tyrosyl-methioninium (Tyr-Met) (with W-91) cross-link spans 218 to 244 (YVNPEGPDGNPDPVAAARDIRDTFARM). A heme b-binding site is contributed by histidine 259.

It belongs to the peroxidase family. Peroxidase/catalase subfamily. Homodimer or homotetramer. The cofactor is heme b. In terms of processing, formation of the three residue Trp-Tyr-Met cross-link is important for the catalase, but not the peroxidase activity of the enzyme.

The catalysed reaction is H2O2 + AH2 = A + 2 H2O. It carries out the reaction 2 H2O2 = O2 + 2 H2O. Bifunctional enzyme with both catalase and broad-spectrum peroxidase activity. This chain is Catalase-peroxidase, found in Burkholderia thailandensis (strain ATCC 700388 / DSM 13276 / CCUG 48851 / CIP 106301 / E264).